The chain runs to 241 residues: Thiamine import ATP-binding protein ThiQ (241 aa).

An ABC transporter domain is found at 7 to 235 (IRLSDVRFSY…AGPEALRHYI (229 aa)). Residue 37-44 (GPSGSGKS) coordinates ATP.

This sequence belongs to the ABC transporter superfamily. Thiamine importer (TC 3.A.1.19.1) family. The complex is composed of two ATP-binding proteins (ThiQ), two transmembrane proteins (ThiP) and a solute-binding protein (ThiB).

It localises to the cell inner membrane. It catalyses the reaction thiamine(out) + ATP + H2O = thiamine(in) + ADP + phosphate + H(+). In terms of biological role, part of the ABC transporter complex ThiBPQ involved in thiamine import. Responsible for energy coupling to the transport system. This Brucella abortus biovar 1 (strain 9-941) protein is Thiamine import ATP-binding protein ThiQ.